We begin with the raw amino-acid sequence, 419 residues long: Tyrosine--tRNA ligase (419 aa).

An L-tyrosine-binding site is contributed by tyrosine 34. The 'HIGH' region motif lies at 39 to 48 (PTADSLHLGN). 2 residues coordinate L-tyrosine: tyrosine 169 and glutamine 173. Residues 229–233 (KFGKS) carry the 'KMSKS' region motif. Lysine 232 is an ATP binding site. An S4 RNA-binding domain is found at 353 to 419 (LTLIELLISA…GKKKNFVLTY (67 aa)).

It belongs to the class-I aminoacyl-tRNA synthetase family. TyrS type 1 subfamily. Homodimer.

It is found in the cytoplasm. The enzyme catalyses tRNA(Tyr) + L-tyrosine + ATP = L-tyrosyl-tRNA(Tyr) + AMP + diphosphate + H(+). Functionally, catalyzes the attachment of tyrosine to tRNA(Tyr) in a two-step reaction: tyrosine is first activated by ATP to form Tyr-AMP and then transferred to the acceptor end of tRNA(Tyr). The polypeptide is Tyrosine--tRNA ligase (Lactococcus lactis subsp. cremoris (strain SK11)).